A 1581-amino-acid chain; its full sequence is Maestro heat-like repeat-containing protein family member 2B (1581 aa).

HEAT repeat units follow at residues 123–160, 305–342, 401–441, 464–501, 526–543, 544–580, 658–695, 773–815, 960–997, 1017–1055, 1112–1150, 1153–1191, 1254–1291, 1295–1332, 1359–1379, and 1380–1416; these read FMMM…SIYK, ANPV…AEEP, MSNR…LVIG, DYLF…KLPS, AIGL…KLAE, MWKT…SLWK, ENHL…LTKT, TYKE…LKPA, CQEV…KFIP, PLCT…HMPV, KLMR…TGAH, HLYP…LGER, GVIL…EPIL, GNLR…GAPH, CESL…DINF, and YFKE…LTGR.

In terms of assembly, found in a complex at least composed of MROH2B isoform 2, PRKACA isoform 2 and TCP11. Interacts with PRKACA isoform 2. Interacts with TCP11. In terms of processing, constitutively phosphorylated on serine and threonine residues in acrosomal region of the sperm head, midpiece and flagellar regions of noncapacitated spermatozoa. Phosphorylation on tyrosine residues increases upon sperm capacitation within the acrosomal and tail regions in a protein kinase A (PKA)-dependent signaling pathway. As to expression, expressed strongly in round spermatids and fully mature spermatozoa. Expressed weakly in pachytene spermatocytes (at protein level). Isoform 2 is specifically expressed in the testis. Isoform 2 is expressed in pachytene spermatocytes and round spermatids. Isoform 3 is weakly expressed in testis.

It is found in the cytoplasm. The protein resides in the cytoplasmic vesicle. It localises to the secretory vesicle. The protein localises to the acrosome. Its subcellular location is the cell projection. It is found in the cilium. The protein resides in the flagellum. Functionally, may play a role in the process of sperm capacitation. The sequence is that of Maestro heat-like repeat-containing protein family member 2B from Mus musculus (Mouse).